The chain runs to 129 residues: Large ribosomal subunit protein uL14m (129 aa).

This sequence belongs to the universal ribosomal protein uL14 family.

It is found in the mitochondrion. The sequence is that of Large ribosomal subunit protein uL14m (RPL14) from Acanthamoeba castellanii (Amoeba).